The chain runs to 450 residues: Crh-like protein 4 (450 aa).

Positions 1 to 21 are cleaved as a signal peptide; the sequence is MRLSLVGVAIGLLSSSAIVTA. A disulfide bridge connects residues C27 and C34. The 183-residue stretch at 46–228 folds into the GH16 domain; it reads YDFTKGSSPD…WAGGETDYSA (183 aa). The active-site Nucleophile is E119. The active-site Proton donor is the E123. The chitin site is built by E123, K201, W205, and T216. An N-linked (GlcNAc...) asparagine glycan is attached at N383.

This sequence belongs to the glycosyl hydrolase 16 family. CRH1 subfamily. The GPI-like anchor contains a phosphoceramide lipid group. The anchor position has not been determined.

It localises to the cell membrane. Its subcellular location is the secreted. The protein resides in the cell wall. It catalyses the reaction Random endo-hydrolysis of N-acetyl-beta-D-glucosaminide (1-&gt;4)-beta-linkages in chitin and chitodextrins.. Functionally, dual chitinase/transglycosylase that plays a role in cell wall architecture. Chitinase and transglycosylase activities are coupled. Required for the polysaccharide cross-linking at the septa and the cell wall. More specifically, transfers chitin to 1,6-beta-glucan in the cell wall. This is Crh-like protein 4 from Aspergillus fumigatus (strain ATCC MYA-4609 / CBS 101355 / FGSC A1100 / Af293) (Neosartorya fumigata).